The sequence spans 187 residues: Ribosome-recycling factor (187 aa).

It belongs to the RRF family.

The protein resides in the cytoplasm. Responsible for the release of ribosomes from messenger RNA at the termination of protein biosynthesis. May increase the efficiency of translation by recycling ribosomes from one round of translation to another. This is Ribosome-recycling factor from Orientia tsutsugamushi (strain Boryong) (Rickettsia tsutsugamushi).